We begin with the raw amino-acid sequence, 326 residues long: ELAV-like protein 1 (326 aa).

At Ser2 the chain carries N-acetylserine. A Phosphoserine modification is found at Ser2. Residues 20 to 98 enclose the RRM 1 domain; it reads TNLIVNYLPQ…KTIKVSYARP (79 aa). A phosphoserine mark is found at Ser100 and Ser158. In terms of domain architecture, RRM 2 spans 106-186; sequence ANLYISGLPR…EPITVKFAAN (81 aa). Residue Lys191 forms a Glycyl lysine isopeptide (Lys-Gly) (interchain with G-Cter in SUMO2) linkage. A phosphoserine mark is found at Ser197 and Ser202. Arg206 is subject to Omega-N-methylarginine. Arg217 is subject to Asymmetric dimethylarginine; by CARM1; alternate. Arg217 bears the Omega-N-methylarginine; alternate mark. Phosphoserine is present on residues Ser221 and Ser318. An RRM 3 domain is found at 244–322; that stretch reads WCIFIYNLGQ…KILQVSFKTN (79 aa).

Belongs to the RRM elav family. Monomer and homodimer (in vitro). Interacts with ANP32A. Interacts with ZNF385A; the interaction is indirect and mRNA-dependent and may regulate p53/TP53 expression. Identified in a mRNP complex, at least composed of DHX9, DDX3X, ELAVL1, HNRNPU, IGF2BP1, ILF3, PABPC1, PCBP2, PTBP2, STAU1, STAU2, SYNCRIP and YBX1. Interacts with AGO1 and AGO2. Interacts with IGF2BP1. Interacts with IGF2BP2 and IGF2BP3. Interacts with HNRNPL. Interacts with DHX36; this interaction occurs in a RNA-dependent manner. Interacts with ILF3; this interaction occurs in a RNA-dependent manner. Interacts with PLEKHN1. Interacts with SHFL; the interaction increases in presence of RNA. Interacts with YBX1; interaction recruits ELAVL1 on C5-methylcytosine (m5C)-containing mRNAs, thereby promoting mRNA stability. Interacts with FXR1. Post-translationally, phosphorylated by MAPKAPK2. Phosphorylated by PRKCD. Methylated at Arg-217 by CARM1 in T-cells in response to LPS challenge.

It is found in the cytoplasm. Its subcellular location is the nucleus. The protein localises to the stress granule. The protein resides in the P-body. RNA-binding protein that binds to the 3'-UTR region of mRNAs and increases their stability. Involved in embryonic stem cell (ESC) differentiation: preferentially binds mRNAs that are not methylated by N6-methyladenosine (m6A), stabilizing them, promoting ESC differentiation. Has also been shown to be capable of binding to m6A-containing mRNAs and contributes to MYC stability by binding to m6A-containing MYC mRNAs. Binds to poly-U elements and AU-rich elements (AREs) in the 3'-UTR of target mRNAs. Binds avidly to the AU-rich element in FOS and IL3/interleukin-3 mRNAs. In the case of the FOS AU-rich element, binds to a core element of 27 nucleotides that contain AUUUA, AUUUUA, and AUUUUUA motifs. Binds preferentially to the 5'-UUUU[AG]UUU-3' motif in vitro. With ZNF385A, binds the 3'-UTR of p53/TP53 mRNA to control their nuclear export induced by CDKN2A. Hence, may regulate p53/TP53 expression and mediate in part the CDKN2A anti-proliferative activity. May also bind with ZNF385A the CCNB1 mRNA. Increases the stability of the leptin mRNA harboring an AU-rich element (ARE) in its 3' UTR. This is ELAV-like protein 1 (Elavl1) from Mus musculus (Mouse).